The sequence spans 576 residues: G protein-coupled receptor kinase 6 (576 aa).

The N-terminal stretch occupies residues 1 to 185 (MELENIVANT…LERQPVTKNT (185 aa)). Residues 53 to 171 (YHSLCERQPI…LDSIYFNRFL (119 aa)) enclose the RGS domain. One can recognise a Protein kinase domain in the interval 186–448 (FRQYRVLGKG…AREVKEHPLF (263 aa)). Residues 192–200 (LGKGGFGEV), K215, and 264–270 (TLMNGGD) each bind ATP. The active-site Proton acceptor is D311. 315-318 (ENIL) is an ATP binding site. The AGC-kinase C-terminal domain occupies 449–514 (KKLNFKRLGA…GSVSIPWQNE (66 aa)). Position 484 is a phosphoserine; by autocatalysis (S484). Phosphothreonine; by autocatalysis is present on T485. Residues C561, C562, and C565 are each lipidated (S-palmitoyl cysteine). Phosphoserine is present on residues S566 and S568.

It belongs to the protein kinase superfamily. AGC Ser/Thr protein kinase family. GPRK subfamily. As to quaternary structure, interacts with GIT1. Widely expressed. Detectable in all brain areas examined.

It localises to the membrane. The catalysed reaction is [G-protein-coupled receptor] + ATP = [G-protein-coupled receptor]-phosphate + ADP + H(+). Functionally, specifically phosphorylates the activated forms of G protein-coupled receptors. Such receptor phosphorylation initiates beta-arrestin-mediated receptor desensitization, internalization, and signaling events leading to their desensitization. Seems to be involved in the desensitization of D2-like dopamine receptors in striatum and chemokine receptor CXCR4 which is critical for CXCL12-induced cell chemotaxis. Phosphorylates rhodopsin (RHO) (in vitro) and a non G-protein-coupled receptor: LRP6 during Wnt signaling (in vitro). In Rattus norvegicus (Rat), this protein is G protein-coupled receptor kinase 6 (Grk6).